A 923-amino-acid chain; its full sequence is Helicase POLQ-like (923 aa).

The tract at residues 1-84 (MNRTPIRRCK…STVTPIQQKI (84 aa)) is disordered. Low complexity predominate over residues 43 to 55 (STSPQSPSSSTEN). In terms of domain architecture, Helicase ATP-binding spans 178 to 349 (DKRLLDGENC…ALRAFVYSTN (172 aa)). Residue 191–198 (LPTGAGKT) participates in ATP binding. A DEAH box motif is present at residues 295–298 (DELH). Residues 392-596 (GICQLLAKLI…CVVLKLAENI (205 aa)) enclose the Helicase C-terminal domain.

It belongs to the helicase family. SKI2 subfamily.

It is found in the nucleus. It localises to the chromosome. The catalysed reaction is Couples ATP hydrolysis with the unwinding of duplex DNA by translocating in the 3'-5' direction.. It catalyses the reaction ATP + H2O = ADP + phosphate + H(+). In terms of biological role, single-stranded 3'-5' DNA helicase that plays a key role in homology-driven double-strand break (DSB) repair. Involved in different DSB repair mechanisms that are guided by annealing of extensive stretches of complementary bases at break ends, such as microhomology-mediated end-joining (MMEJ), single-strand annealing (SSA) or synthesis-dependent strand annealing (SDSA). This Caenorhabditis elegans protein is Helicase POLQ-like.